The sequence spans 185 residues: Iodate reductase subunit IdrB (185 aa).

The tat-type signal signal peptide spans 1–46 (MTTHPIHLHHDDPAHGGERACMSRRSFLLAGGAMVTLASLPGTAVA). Positions 69 to 168 (GEPLEFAYPY…LEVRGDDIYA (100 aa)) constitute a Rieske domain. Residues Cys109, His111, Cys130, and His133 each coordinate [2Fe-2S] cluster.

The protein belongs to the AOX family. As to quaternary structure, the iodate reductase (Idr) complex is composed of a molybdopterin-dependent iodate reductase (IdrA and IdrB subunits) and two associated peroxidases (IdrP1 and IdrP2). The cofactor is [2Fe-2S] cluster. In terms of processing, predicted to be exported by the Tat system. The position of the signal peptide cleavage has not been experimentally proven.

It localises to the periplasm. Involved in iodate respiration. May accept electrons from cytochrome c551, and catalyze the reduction of iodate (IO(3)(-)) to produce the chemically unstable intermediate hypoiodous acid (HIO). This intermediate then undergoes abiotic disproportionation to yield two molecules of iodide (I(-)) and one molecule of iodate. The resultant iodate subsequently cycles back into the reductive pathway. The initial reduction of iodate may inadvertently produce low levels of incidental toxic H(2)O(2), which is detoxified by IdrP1 and IdrP2. This chain is Iodate reductase subunit IdrB, found in Denitromonas iodatirespirans.